The following is a 405-amino-acid chain: Interferon alpha/beta receptor 1a (405 aa).

Positions methionine 1–alanine 20 are cleaved as a signal peptide. The Extracellular segment spans residues glutamate 21 to glutamine 233. Fibronectin type-III domains are found at residues leucine 22–serine 123 and proline 126–aspartate 228. N-linked (GlcNAc...) asparagine glycosylation is found at asparagine 27 and asparagine 70. Cystine bridges form between cysteine 75-cysteine 83 and cysteine 201-cysteine 222. An N-linked (GlcNAc...) asparagine glycan is attached at asparagine 212. The helical transmembrane segment at isoleucine 234–tyrosine 254 threads the bilayer. Over alanine 255–valine 405 the chain is Cytoplasmic. A disordered region spans residues threonine 325 to serine 374. Residues aspartate 334–serine 343 show a composition bias toward basic and acidic residues. Over residues isoleucine 348 to glycine 359 the composition is skewed to polar residues.

It belongs to the type II cytokine receptor family. Heterodimer with IFNAR2; forming the receptor for type I interferon.

It is found in the cell membrane. Functionally, together with IFNAR2, forms the heterodimeric receptor for type I interferons (including interferons alpha, beta, epsilon, omega and kappa). Type I interferon binding activates the JAK-STAT signaling cascade, resulting in transcriptional activation or repression of interferon-regulated genes that encode the effectors of the interferon response. Mechanistically, type I interferon-binding brings the IFNAR1 and IFNAR2 subunits into close proximity with one another, driving their associated Janus kinases (JAKs) (TYK2 bound to IFNAR1 and JAK1 bound to IFNAR2) to cross-phosphorylate one another. The activated kinases phosphorylate specific tyrosine residues on the intracellular domains of IFNAR1 and IFNAR2, forming docking sites for the STAT transcription factors. STAT proteins are then phosphorylated by the JAKs, promoting their translocation into the nucleus to regulate expression of interferon-regulated genes. The chain is Interferon alpha/beta receptor 1a from Oncorhynchus mykiss (Rainbow trout).